The chain runs to 253 residues: Sulfate transporter CysZ (253 aa).

The next 4 membrane-spanning stretches (helical) occupy residues 31–51, 72–92, 151–171, and 222–242; these read FVIL…WWLF, LSYL…GYFF, IVLL…PVLW, and IPVL…AMWV.

This sequence belongs to the CysZ family.

The protein resides in the cell inner membrane. Functionally, possibly involved in sulfate transport. In terms of biological role, high affinity, high specificity proton-dependent sulfate transporter, which mediates sulfate uptake. Provides the sulfur source for the cysteine synthesis pathway. The sequence is that of Sulfate transporter CysZ from Salmonella typhimurium (strain LT2 / SGSC1412 / ATCC 700720).